Reading from the N-terminus, the 547-residue chain is Glucose-6-phosphate isomerase (547 aa).

Glu353 (proton donor) is an active-site residue. Residues His384 and Lys512 contribute to the active site.

This sequence belongs to the GPI family.

The protein localises to the cytoplasm. The catalysed reaction is alpha-D-glucose 6-phosphate = beta-D-fructose 6-phosphate. It participates in carbohydrate biosynthesis; gluconeogenesis. Its pathway is carbohydrate degradation; glycolysis; D-glyceraldehyde 3-phosphate and glycerone phosphate from D-glucose: step 2/4. Catalyzes the reversible isomerization of glucose-6-phosphate to fructose-6-phosphate. The chain is Glucose-6-phosphate isomerase from Glaesserella parasuis serovar 5 (strain SH0165) (Haemophilus parasuis).